Consider the following 161-residue polypeptide: Alpha-crystallin A chain (161 aa).

At Met-1 the chain carries N-acetylmethionine. The interval 1-53 (MDVTIQHPWFKRALGPFYHNRLFDQFFGEGLFEYDLLPFQSLFRTVLDSGISE) is required for complex formation with BFSP1 and BFSP2. Deamidated glutamine; partial is present on residues Gln-6 and Gln-40. Residues 41-150 (SLFRTVLDSG…SHSERAIPVS (110 aa)) form the sHSP domain. Lys-87 is subject to N6-acetyllysine. Residue His-88 participates in Zn(2+) binding. Asn-89 carries the deamidated asparagine; partial modification. Zn(2+)-binding residues include Glu-90 and His-95. Phosphoserine is present on Ser-110. A Deamidated asparagine; partial modification is found at Asn-111. Cys-119 and Cys-130 form a disulfide bridge. Residue Gln-135 is modified to Deamidated glutamine; partial. A disordered region spans residues 135–161 (QSGMDASHSERAIPVSREEKASSAPNS). The span at 141–155 (SHSERAIPVSREEKA) shows a compositional bias: basic and acidic residues. A Zn(2+)-binding site is contributed by His-142. Ser-150 is a glycosylation site (O-linked (GlcNAc) serine).

This sequence belongs to the small heat shock protein (HSP20) family. Heteromer composed of three CRYAA and one CRYAB subunits. Inter-subunit bridging via zinc ions enhances stability, which is crucial as there is no protein turn over in the lens. Can also form homodimers and homotetramers (dimers of dimers) which serve as the building blocks of homooligomers. Within homooligomers, the zinc-binding motif is created from residues of 3 different molecules. His-88 and Glu-90 from one molecule are ligands of the zinc ion, and His-95 and His-142 residues from additional molecules complete the site with tetrahedral coordination geometry. Part of a complex required for lens intermediate filament formation composed of BFSP1, BFSP2 and CRYAA. Undergoes age-dependent proteolytical cleavage at the C-terminus.

It is found in the cytoplasm. The protein localises to the nucleus. In terms of biological role, contributes to the transparency and refractive index of the lens. In its oxidized form (absence of intramolecular disulfide bond), acts as a chaperone, preventing aggregation of various proteins under a wide range of stress conditions. Required for the correct formation of lens intermediate filaments as part of a complex composed of BFSP1, BFSP2 and CRYAA. This is Alpha-crystallin A chain (CRYAA) from Trichechus inunguis (Amazon manatee).